The chain runs to 199 residues: MSWLLGYVDPTEPSFVAAVLTIVFNPLFWNVVARWEQRTRKLSRAFGSPYLACYSLGSIILLLNILRSHCFTQAMMSQPKMEGLDSHTIYFLGLALLGWGLVFVLSSFYALGFTGTFLGDYFGILKESRVTTFPFSVLDNPMYWGSTANYLGWALMHASPTGLLLTVLVALVYVVALLFEEPFTAEIYRRKATRLHKRS.

Over 2-12 the chain is Lumenal; that stretch reads SWLLGYVDPTE. An intramembrane region (helical) is located at residues 13-33; the sequence is PSFVAAVLTIVFNPLFWNVVA. Residues 34–45 are Lumenal-facing; it reads RWEQRTRKLSRA. Residues 46–66 form a helical membrane-spanning segment; the sequence is FGSPYLACYSLGSIILLLNIL. The Cytoplasmic segment spans residues 67 to 93; it reads RSHCFTQAMMSQPKMEGLDSHTIYFLG. The helical transmembrane segment at 94–114 threads the bilayer; it reads LALLGWGLVFVLSSFYALGFT. An S-adenosyl-L-methionine-binding site is contributed by 98-100; that stretch reads GWG. Over 115–157 the chain is Lumenal; the sequence is GTFLGDYFGILKESRVTTFPFSVLDNPMYWGSTANYLGWALMH. Residues 158–178 form a helical membrane-spanning segment; that stretch reads ASPTGLLLTVLVALVYVVALL. Topologically, residues 179-199 are cytoplasmic; that stretch reads FEEPFTAEIYRRKATRLHKRS. 180–181 contacts S-adenosyl-L-methionine; sequence EE.

This sequence belongs to the class VI-like SAM-binding methyltransferase superfamily. PEMT/PEM2 methyltransferase family. Expressed in liver (at protein level).

Its subcellular location is the endoplasmic reticulum membrane. It localises to the mitochondrion membrane. The catalysed reaction is a 1,2-diacyl-sn-glycero-3-phosphoethanolamine + S-adenosyl-L-methionine = a 1,2-diacyl-sn-glycero-3-phospho-N-methylethanolamine + S-adenosyl-L-homocysteine + H(+). The enzyme catalyses a 1,2-diacyl-sn-glycero-3-phospho-N-methylethanolamine + S-adenosyl-L-methionine = a 1,2-diacyl-sn-glycero-3-phospho-N,N-dimethylethanolamine + S-adenosyl-L-homocysteine + H(+). It catalyses the reaction a 1,2-diacyl-sn-glycero-3-phospho-N,N-dimethylethanolamine + S-adenosyl-L-methionine = a 1,2-diacyl-sn-glycero-3-phosphocholine + S-adenosyl-L-homocysteine + H(+). It carries out the reaction 1,2-di-(9Z-octadecenoyl)-sn-glycero-3-phosphoethanolamine + S-adenosyl-L-methionine = 1,2-di-(9Z-octadecenoyl)-sn-glycero-3-phospho-N-methylethanolamine + S-adenosyl-L-homocysteine + H(+). The catalysed reaction is 1,2-di-(9Z-octadecenoyl)-sn-glycero-3-phospho-N-methylethanolamine + S-adenosyl-L-methionine = 1,2-di-(9Z-octadecenoyl)-sn-glycero-3-phospho-N,N-dimethylethanolamine + S-adenosyl-L-homocysteine + H(+). The enzyme catalyses 1,2-di-(9Z-octadecenoyl)-sn-glycero-3-phospho-N,N-dimethylethanolamine + S-adenosyl-L-methionine = 1,2-di-(9Z-octadecenoyl)-sn-glycero-3-phosphocholine + S-adenosyl-L-homocysteine + H(+). It catalyses the reaction 1,2-di-(9Z,12Z-octadecadienoyl)-sn-glycero-3-phosphoethanolamine + S-adenosyl-L-methionine = 1,2-di-(9Z,12Z-octadecadienoyl)-sn-glycero-3-phospho-N-methylethanolamine + S-adenosyl-L-homocysteine + H(+). It carries out the reaction 1,2-di-(9Z,12Z-octadecadienoyl)-sn-glycero-3-phospho-N-methylethanolamine + S-adenosyl-L-methionine = 1,2-di-(9Z,12Z-octadecadienoyl)-sn-glycero-3-phospho-N,N-dimethylethanolamine + S-adenosyl-L-homocysteine + H(+). The catalysed reaction is 1,2-di-(9Z,12Z-octadecadienoyl)-sn-glycero-3-phospho-N,N-dimethylethanolamine + S-adenosyl-L-methionine = 1,2-di-(9Z,12Z-octadecadienoyl)-sn-glycero-3-phosphocholine + S-adenosyl-L-homocysteine + H(+). The enzyme catalyses 1,2-di-(9Z,12Z,15Z-octadecatrienoyl)-sn-glycero-3-phosphoethanolamine + S-adenosyl-L-methionine = 1,2-di-(9Z,12Z,15Z-octadecatrienoyl)-sn-glycero-3-phospho-N-methylethanolamine + S-adenosyl-L-homocysteine + H(+). It catalyses the reaction 1,2-di-(9Z,12Z,15Z-octadecatrienoyl)-sn-glycero-3-phospho-N-methylethanolamine + S-adenosyl-L-methionine = 1,2-di-(9Z,12Z,15Z-octadecatrienoyl)-sn-glycero-3-phospho-N,N-dimethylethanolamine + S-adenosyl-L-homocysteine + H(+). It carries out the reaction 1,2-di-(9Z,12Z,15Z-octadecatrienoyl)-sn-glycero-3-phospho-N,N-dimethylethanolamine + S-adenosyl-L-methionine = 1,2-di-(9Z,12Z,15Z-octadecatrienoyl)-sn-glycero-3-phosphocholine + S-adenosyl-L-homocysteine + H(+). The catalysed reaction is 1-hexadecanoyl-2-(4Z,7Z,10Z,13Z,16Z,19Z-docosahexaenoyl)-sn-glycero-3-phosphoethanolamine + S-adenosyl-L-methionine = 1-hexadecanoyl-2-(4Z,7Z,10Z,13Z,16Z,19Z-docosahexaenoyl)-sn-glycero-3-phospho-N-methylethanolamine + S-adenosyl-L-homocysteine + H(+). The enzyme catalyses 1-hexadecanoyl-2-(4Z,7Z,10Z,13Z,16Z,19Z-docosahexaenoyl)-sn-glycero-3-phospho-N-methylethanolamine + S-adenosyl-L-methionine = 1-hexadecanoyl-2-(4Z,7Z,10Z,13Z,16Z,19Z-docosahexaenoyl)-sn-glycero-3-phospho-N,N-dimethylethanolamine + S-adenosyl-L-homocysteine + H(+). It catalyses the reaction 1-hexadecanoyl-2-(4Z,7Z,10Z,13Z,16Z,19Z-docosahexaenoyl)-sn-glycero-3-phospho-N,N-dimethylethanolamine + S-adenosyl-L-methionine = 1-hexadecanoyl-2-(4Z,7Z,10Z,13Z,16Z,19Z-docosahexaenoyl)-sn-glycero-3-phosphocholine + S-adenosyl-L-homocysteine + H(+). Its pathway is phospholipid metabolism; phosphatidylcholine biosynthesis. In terms of biological role, catalyzes the three sequential steps of the methylation pathway for the biosynthesis of phosphatidylcholine, a critical and essential component for membrane structure. Uses S-adenosylmethionine (S-adenosyl-L-methionine, SAM or AdoMet) as the methyl group donor for the methylation of phosphatidylethanolamine (1,2-diacyl-sn-glycero-3-phosphoethanolamine, PE) to phosphatidylmonomethylethanolamine (1,2-diacyl-sn-glycero-3-phospho-N-methylethanolamine, PMME), PMME to phosphatidyldimethylethanolamine (1,2-diacyl-sn-glycero-3-phospho-N,N-dimethylethanolamine, PDME), and PDME to phosphatidylcholine (1,2-diacyl-sn-glycero-3-phosphocholine, PC), producing S-adenosyl-L-homocysteine in each step. The chain is Phosphatidylethanolamine N-methyltransferase from Rattus norvegicus (Rat).